Here is a 361-residue protein sequence, read N- to C-terminus: uncharacterized protein (361 aa).

Residue 33 to 40 (GPINSGKT) coordinates ATP.

It belongs to the archaeal ATPase family.

This is an uncharacterized protein from Methanocaldococcus jannaschii (strain ATCC 43067 / DSM 2661 / JAL-1 / JCM 10045 / NBRC 100440) (Methanococcus jannaschii).